A 97-amino-acid polypeptide reads, in one-letter code: Spermatogenesis-associated protein 45 (97 aa).

Belongs to the SPATA45 family.

In Mus musculus (Mouse), this protein is Spermatogenesis-associated protein 45 (Spata45).